Reading from the N-terminus, the 478-residue chain is Protein nucleotidyltransferase YdiU (478 aa).

ATP is bound by residues G84, G86, R87, K107, D119, G120, R170, and R177. D246 functions as the Proton acceptor in the catalytic mechanism. The Mg(2+) site is built by N247 and D256. D256 contributes to the ATP binding site.

The protein belongs to the SELO family. Mg(2+) serves as cofactor. Mn(2+) is required as a cofactor.

The enzyme catalyses L-seryl-[protein] + ATP = 3-O-(5'-adenylyl)-L-seryl-[protein] + diphosphate. It carries out the reaction L-threonyl-[protein] + ATP = 3-O-(5'-adenylyl)-L-threonyl-[protein] + diphosphate. The catalysed reaction is L-tyrosyl-[protein] + ATP = O-(5'-adenylyl)-L-tyrosyl-[protein] + diphosphate. It catalyses the reaction L-histidyl-[protein] + UTP = N(tele)-(5'-uridylyl)-L-histidyl-[protein] + diphosphate. The enzyme catalyses L-seryl-[protein] + UTP = O-(5'-uridylyl)-L-seryl-[protein] + diphosphate. It carries out the reaction L-tyrosyl-[protein] + UTP = O-(5'-uridylyl)-L-tyrosyl-[protein] + diphosphate. Nucleotidyltransferase involved in the post-translational modification of proteins. It can catalyze the addition of adenosine monophosphate (AMP) or uridine monophosphate (UMP) to a protein, resulting in modifications known as AMPylation and UMPylation. The polypeptide is Protein nucleotidyltransferase YdiU (Shigella boydii serotype 4 (strain Sb227)).